Here is a 176-residue protein sequence, read N- to C-terminus: NAD(P)H-quinone oxidoreductase subunit 6, chloroplastic (176 aa).

A run of 5 helical transmembrane segments spans residues 10-30 (FLLV…VLLP), 32-52 (PIYS…FYIL), 61-81 (AQLL…VMFM), 92-112 (LWTV…VSLI), and 152-172 (FFLP…GAIT).

Belongs to the complex I subunit 6 family. As to quaternary structure, NDH is composed of at least 16 different subunits, 5 of which are encoded in the nucleus.

It localises to the plastid. The protein resides in the chloroplast thylakoid membrane. It catalyses the reaction a plastoquinone + NADH + (n+1) H(+)(in) = a plastoquinol + NAD(+) + n H(+)(out). It carries out the reaction a plastoquinone + NADPH + (n+1) H(+)(in) = a plastoquinol + NADP(+) + n H(+)(out). NDH shuttles electrons from NAD(P)H:plastoquinone, via FMN and iron-sulfur (Fe-S) centers, to quinones in the photosynthetic chain and possibly in a chloroplast respiratory chain. The immediate electron acceptor for the enzyme in this species is believed to be plastoquinone. Couples the redox reaction to proton translocation, and thus conserves the redox energy in a proton gradient. This chain is NAD(P)H-quinone oxidoreductase subunit 6, chloroplastic (ndhG), found in Daucus carota (Wild carrot).